A 314-amino-acid polypeptide reads, in one-letter code: MTSTRYEGDTWDLASSVGVTATMVAAARAMATRADNPLINDPFAEPLVKAVGVDLLSRLAGGELDPAELNDVHDGAAGSAGAMSRMADNMAVRTKFFDEFFLNATKAGIAQVVILASGLDARAYRLAWPAGTVVYEVDQPQVIDFKTTALAQLGAAPTAERRVVAVDLRDDWPAALRAAGFDPTRPTAWSAEGLLGYLPPEAQDRLLDTITELSAPGSRLATESAPNPAPGEEEKLKERMQAISQRWRAHGFDLDMAGLVYFGERNEAAPYLAGHGWRLNSVTIRDLFAANGLDPLDDDDTRMGEMLYTWGIYE.

S-adenosyl-L-methionine-binding positions include Asp-138 and 167-168 (DL).

It belongs to the UPF0677 family.

Functionally, exhibits S-adenosyl-L-methionine-dependent methyltransferase activity. This is Putative S-adenosyl-L-methionine-dependent methyltransferase MAV_4441 from Mycobacterium avium (strain 104).